We begin with the raw amino-acid sequence, 1726 residues long: Probable serine/threonine-protein kinase roco4 (1726 aa).

LRR repeat units lie at residues 256-277 (KGKR…ITQM), 280-301 (HLVE…IQLL), 303-324 (SLRI…ICYL), and 326-347 (DLKI…VVQS). One can recognise a Roc domain in the interval 364–544 (KSETWNKVKL…KRLIHEAEKS (181 aa)). Residues 377-384 (GQEGVGKT), 428-432 (DFGGQ), and 487-490 (THSD) contribute to the GTP site. Positions 591-787 (AINSQKERYI…RTYWRNGVLL (197 aa)) constitute a COR domain. A compositionally biased stretch (low complexity) spans 800–881 (SKQQQLQQQQ…STLNSQQLIN (82 aa)). The segment at 800–890 (SKQQQLQQQQ…NPSVSPLSST (91 aa)) is disordered. The 267-residue stretch at 1026 to 1292 (IEYEKQIGKG…SYIVKELSEL (267 aa)) folds into the Protein kinase domain. ATP is bound by residues 1032-1040 (IGKGGFGLV) and Lys-1055. Asp-1154 acts as the Proton acceptor in catalysis. The segment covering 1319–1331 (ASTSSNADDGSQT) has biased composition (polar residues). A disordered region spans residues 1319–1385 (ASTSSNADDG…SSPSTSFINS (67 aa)). Over residues 1332 to 1348 (NNNNNNNNNNNNNNNNN) the composition is skewed to low complexity. The segment covering 1349-1364 (SGSSIALSPSRSFEQQ) has biased composition (polar residues). Residues 1365–1381 (TTTTTTTTTSPSSPSTS) show a composition bias toward low complexity. WD repeat units follow at residues 1422–1461 (SVHK…LINE), 1463–1502 (KCPH…IVQQ), 1506–1546 (PHKG…KKHS), 1589–1627 (KHST…ELQK), 1633–1670 (AHHE…KPFT), and 1674–1714 (HHKQ…EKKT).

This sequence belongs to the protein kinase superfamily. TKL Ser/Thr protein kinase family. ROCO subfamily.

It catalyses the reaction L-seryl-[protein] + ATP = O-phospho-L-seryl-[protein] + ADP + H(+). The catalysed reaction is L-threonyl-[protein] + ATP = O-phospho-L-threonyl-[protein] + ADP + H(+). This chain is Probable serine/threonine-protein kinase roco4 (roco4), found in Dictyostelium discoideum (Social amoeba).